The sequence spans 155 residues: 6,7-dimethyl-8-ribityllumazine synthase (155 aa).

5-amino-6-(D-ribitylamino)uracil-binding positions include Phe23, 57 to 59, and 80 to 82; these read AFE and AVI. Position 85-86 (85-86) interacts with (2S)-2-hydroxy-3-oxobutyl phosphate; it reads AT. The active-site Proton donor is His88. 5-amino-6-(D-ribitylamino)uracil is bound at residue Tyr113. Arg127 lines the (2S)-2-hydroxy-3-oxobutyl phosphate pocket.

Belongs to the DMRL synthase family.

The catalysed reaction is (2S)-2-hydroxy-3-oxobutyl phosphate + 5-amino-6-(D-ribitylamino)uracil = 6,7-dimethyl-8-(1-D-ribityl)lumazine + phosphate + 2 H2O + H(+). The protein operates within cofactor biosynthesis; riboflavin biosynthesis; riboflavin from 2-hydroxy-3-oxobutyl phosphate and 5-amino-6-(D-ribitylamino)uracil: step 1/2. Its function is as follows. Catalyzes the formation of 6,7-dimethyl-8-ribityllumazine by condensation of 5-amino-6-(D-ribitylamino)uracil with 3,4-dihydroxy-2-butanone 4-phosphate. This is the penultimate step in the biosynthesis of riboflavin. In Moorella thermoacetica (strain ATCC 39073 / JCM 9320), this protein is 6,7-dimethyl-8-ribityllumazine synthase.